We begin with the raw amino-acid sequence, 380 residues long: Homoserine O-succinyltransferase (380 aa).

The region spanning 49–357 (NAILICHALS…ESTHGHDAFL (309 aa)) is the AB hydrolase-1 domain. The active-site Nucleophile is S155. Substrate is bound at residue R225. Active-site residues include D320 and H353. D354 lines the substrate pocket.

This sequence belongs to the AB hydrolase superfamily. MetX family. As to quaternary structure, homodimer.

It is found in the cytoplasm. It catalyses the reaction L-homoserine + succinyl-CoA = O-succinyl-L-homoserine + CoA. The protein operates within amino-acid biosynthesis; L-methionine biosynthesis via de novo pathway; O-succinyl-L-homoserine from L-homoserine: step 1/1. Transfers a succinyl group from succinyl-CoA to L-homoserine, forming succinyl-L-homoserine. In Laribacter hongkongensis (strain HLHK9), this protein is Homoserine O-succinyltransferase.